A 618-amino-acid polypeptide reads, in one-letter code: Sodium-coupled monocarboxylate transporter 2 (618 aa).

The Extracellular segment spans residues 1–9 (MEVKNFAVW). The helical transmembrane segment at 10-30 (DYVVFAALFFISSGIGVFFAI) threads the bilayer. The Cytoplasmic portion of the chain corresponds to 31-47 (KERKKATSREFLVGGRQ). The chain crosses the membrane as a helical span at residues 48 to 68 (MSFGPVGLSLTASFMSAVTVL). The Extracellular portion of the chain corresponds to 69 to 82 (GTPSEVYRFGASFL). A helical membrane pass occupies residues 83–103 (VFFIAYLFVILLTSELFLPVF). Over 104-128 (YRSGITSTYEYLQLRFNKPVRYAAT) the chain is Cytoplasmic. A helical membrane pass occupies residues 129-149 (VIYIVQTILYTGVVVYAPALA). Residues 150-157 (LNQVTGFD) are Extracellular-facing. A helical membrane pass occupies residues 158 to 178 (LWGSVFATGIVCTFYCTLGGL). The Cytoplasmic segment spans residues 179-180 (KA). The helical transmembrane segment at 181 to 201 (VVWTDAFQMVVMIVGFLTVLI) threads the bilayer. The Extracellular segment spans residues 202 to 235 (QGSTHAGGFHNVLEQSTNGSRLHIFDFDVDPLRR). The chain crosses the membrane as a helical span at residues 236 to 256 (HTFWTITVGGTFTWLGIYGVN). At 257-275 (QSTIQRCISCKTEKHAKLA) the chain is on the cytoplasmic side. Residues 276–296 (LYFNLLGLWIILVCAVFSGLI) form a helical membrane-spanning segment. Residues 297–321 (MYSHFKDCDPWTSGIISAPDQLMPY) are Extracellular-facing. The helical transmembrane segment at 322 to 342 (FVMEIFATMPGLPGLFVACAF) threads the bilayer. The Cytoplasmic segment spans residues 343–385 (SGTLSTVASSINALATVTFEDFVKSCFPHLSDKLSTWISKGLC). The chain crosses the membrane as a helical span at residues 386–406 (LLFGVMCTSMAVAASVMGGVV). Residues 407–411 (QASLS) are Extracellular-facing. Residues 412–432 (IHGMCGGPMLGLFSLGIVFPF) form a helical membrane-spanning segment. At 433–437 (VNWKG) the chain is on the cytoplasmic side. The chain crosses the membrane as a helical span at residues 438–458 (ALGGLLTGITLSFWVAIGAFI). Over 459 to 504 (YPAPASKTWPLPLSTDQCIKSNVTATGPPVLSSRPGIADTWYSISY) the chain is Extracellular. Residue Asn480 is glycosylated (N-linked (GlcNAc...) asparagine). Residues 505–525 (LYYSAVGCLGCIVAGVIISLI) traverse the membrane as a helical segment. Residues 526–618 (TGRQRGEDIQ…NNMAFETTHF (93 aa)) lie on the Cytoplasmic side of the membrane.

Belongs to the sodium:solute symporter (SSF) (TC 2.A.21) family.

It localises to the apical cell membrane. It carries out the reaction (S)-lactate(out) + Na(+)(out) = (S)-lactate(in) + Na(+)(in). The catalysed reaction is nicotinate(out) + Na(+)(out) = nicotinate(in) + Na(+)(in). The enzyme catalyses pyruvate(out) + Na(+)(out) = pyruvate(in) + Na(+)(in). It catalyses the reaction propanoate(out) + Na(+)(out) = propanoate(in) + Na(+)(in). It carries out the reaction butanoate(out) + Na(+)(out) = butanoate(in) + Na(+)(in). The catalysed reaction is acetoacetate(out) + Na(+)(out) = acetoacetate(in) + Na(+)(in). Its activity is regulated as follows. Cotransport of monocarboxylates and nicotinate strongly inhibited by ibuprofen, fenoprofen and ketoprofen. Functionally, acts as an electroneutral and low-affinity sodium (Na(+))-dependent sodium-coupled solute transporter. Catalyzes the transport across the plasma membrane of many monocarboxylates such as lactate, pyruvate, nicotinate, propionate, butyrate and beta-D-hydroxybutyrate. May be responsible for the first step of reabsorption of monocarboxylates from the lumen of the proximal tubule of the kidney and the small intestine. May play also a role in monocarboxylates transport in the retina. This is Sodium-coupled monocarboxylate transporter 2 from Homo sapiens (Human).